A 534-amino-acid chain; its full sequence is Lariat debranching enzyme A (534 aa).

A divalent metal cation is bound by residues cysteine 8, histidine 10, aspartate 39, and asparagine 84. The tract at residues 124-154 (SGIFKSHDYRKGHFERPPYSKDTVRSAYHVR) is lariat recognition loop. Residues histidine 174, histidine 226, and histidine 228 each coordinate a divalent metal cation. Disordered regions lie at residues 386–439 (EEEK…QEDE) and 469–534 (SMAV…DEDE). Positions 388-400 (EKEDFDMTEDNEA) are enriched in acidic residues. Residues 413–424 (STDTSILSTSVN) show a composition bias toward polar residues. Positions 428 to 439 (ITLEDDDEQEDE) are enriched in acidic residues. A compositionally biased stretch (basic and acidic residues) spans 484 to 499 (ELDRSESSQTEGEGKQ).

The protein belongs to the lariat debranching enzyme family. The cofactor is Fe(2+). Zn(2+) serves as cofactor. It depends on Mn(2+) as a cofactor.

The protein localises to the nucleus. With respect to regulation, active in presence of diverse metals including Fe(2+), Zn(2+), Mn(2+). Also activated by Ca(2+). Binds two metal cations in two adjacent alpha and beta metal-binding pockets. Cleaves the 2'-5' phosphodiester linkage at the branch point of excised lariat intron RNA and converts them into linear molecules that can be subsequently degraded, thereby facilitating ribonucleotide turnover. Linked to its role in pre-mRNA processing mechanism, may also participate in retrovirus replication and have an antiviral cell-intrinsic defense function. In Xenopus laevis (African clawed frog), this protein is Lariat debranching enzyme A (dbr1-a).